The following is a 240-amino-acid chain: uncharacterized protein (240 aa).

The Proton acceptor role is filled by D66. D129 is a catalytic residue. The Proton acceptor role is filled by H131.

This sequence belongs to the glucosamine/galactosamine-6-phosphate isomerase family.

This is an uncharacterized protein from Escherichia coli (strain K12).